The sequence spans 336 residues: CST complex subunit STN1 (336 aa).

A DNA-binding region (OB) is located at residues 49 to 126 (VDILGTVVCV…EVVASIFYKV (78 aa)). Winged helix-turn-helix (wHTH) regions lie at residues 162 to 263 (QSQE…YVTD) and 264 to 336 (HDKE…YTAF).

It belongs to the CTC1 family. As to quaternary structure, component of the CST complex.

The protein localises to the nucleus. Its subcellular location is the chromosome. It localises to the telomere. Component of the CST complex proposed to act as a specialized replication factor promoting DNA replication under conditions of replication stress or natural replication barriers such as the telomere duplex. The CST complex binds single-stranded DNA with high affinity in a sequence-independent manner, while isolated subunits bind DNA with low affinity by themselves. Initially the CST complex has been proposed to protect telomeres from DNA degradation. However, the CST complex has been shown to be involved in several aspects of telomere replication. This Aquarana catesbeiana (American bullfrog) protein is CST complex subunit STN1.